Reading from the N-terminus, the 592-residue chain is Inactive heparanase-2 (592 aa).

A signal peptide spans methionine 1–alanine 41. 2 N-linked (GlcNAc...) asparagine glycosylation sites follow: asparagine 254 and asparagine 392.

Belongs to the glycosyl hydrolase 79 family. As to quaternary structure, interacts with HPSE. Interacts with SDC1 (via glycan chains). Widely expressed, with the highest expression in brain, mammary gland, prostate, small intestine, testis and uterus. In the central nervous system, expressed in the spinal cord, caudate nucleus, thalamus, substantia nigra, medulla oblongata, putamen and pons. In the urinary bladder, expressed in longitudinal and circular layers of detrusor muscle. Found both in normal and cancer tissues.

The protein resides in the secreted. It localises to the extracellular space. The protein localises to the extracellular matrix. Binds heparin and heparan sulfate with high affinity, but lacks heparanase activity. Inhibits HPSE, possibly by competing for its substrates (in vitro). This Homo sapiens (Human) protein is Inactive heparanase-2 (HPSE2).